Reading from the N-terminus, the 561-residue chain is MMQGEVSPSPSLIDRTIRMRKETESRKVVLAWGLLNVSMAGMIYTEMTGKLISTYYNVTYWPLWYIELALASLFSLNALFDFWRYFKYTVAPTSLVVSPGQQTLLGLKPAVVQTTPPRDLAATQISPSPPSPSIQGQSVLSYSPSRSPSTSPKFATSCMTGYSPQLQGLSSGGLGSYSPAVTYSPVSGYSKLASFSLSPSSPYPTTVGPVESSGLRARYRSPPTAYNSPTDKEDYMTDLRTLDTFLRSEEEKQHRVKLGSPDSTSPSTSPTFWNYSRSVGDYAQTLKKFQYQLACRSQAPCANKDEADLISKQAAEEVWARVTMNRQLLDHMDSWTAKFRNWISETILVPLVQEIESVSTQMRRMGCPELQIGEASVTSLKQAALVKAPLIPTLNAIVQYLDLTPNQEYLFERIKELSQGGCMSSFRWNRGGDFKGRRWDTDLPTDSAIIMHVFCTYLDSRLPPHPKYPDGKTFTSQHFVQTPNKPDVTNENVFCVYQSAINPPHYELIYQRHVYSLPKGRNNMFHTLLMFLYIIKTKESGMLGRVNLGLSGVNILWIFGE.

A phosphoserine mark is found at Ser-9 and Ser-11. The helical transmembrane segment at 28–48 threads the bilayer; the sequence is VVLAWGLLNVSMAGMIYTEMT. A glycan (N-linked (GlcNAc...) asparagine) is linked at Asn-57. Residues 60–80 traverse the membrane as a helical segment; it reads YWPLWYIELALASLFSLNALF. Ser-98 is modified (phosphoserine). Disordered stretches follow at residues 120 to 156 and 196 to 233; these read LAATQISPSPPSPSIQGQSVLSYSPSRSPSTSPKFAT and SLSPSSPYPTTVGPVESSGLRARYRSPPTAYNSPTDKE. Positions 138–152 are enriched in low complexity; the sequence is SVLSYSPSRSPSTSP. Phosphoserine occurs at positions 201 and 248. A disordered region spans residues 250–270; that stretch reads EEKQHRVKLGSPDSTSPSTSP. Positions 260-270 are enriched in low complexity; that stretch reads SPDSTSPSTSP. Residue Asn-274 is glycosylated (N-linked (GlcNAc...) asparagine). A Phosphoserine modification is found at Ser-278.

As to quaternary structure, interacts with NUP205.

It is found in the membrane. The protein resides in the nucleus envelope. The protein localises to the golgi apparatus. It localises to the cytoplasm. Functionally, nuclear envelope protein which in association with NUP205, may be involved in nuclear transport of various nuclear proteins in addition to MYC. The protein is Transmembrane protein 209 (Tmem209) of Rattus norvegicus (Rat).